The chain runs to 73 residues: Exodeoxyribonuclease 7 small subunit (73 aa).

Belongs to the XseB family. In terms of assembly, heterooligomer composed of large and small subunits.

The protein resides in the cytoplasm. The enzyme catalyses Exonucleolytic cleavage in either 5'- to 3'- or 3'- to 5'-direction to yield nucleoside 5'-phosphates.. Bidirectionally degrades single-stranded DNA into large acid-insoluble oligonucleotides, which are then degraded further into small acid-soluble oligonucleotides. The protein is Exodeoxyribonuclease 7 small subunit of Streptococcus mutans serotype c (strain ATCC 700610 / UA159).